Consider the following 171-residue polypeptide: MLPRAAWSLVLRKGGGGRRGMHSSEGTTRGGGKMSPYTNCYAQRYYPMPEEPFCTELNAEEQALKEKEKGSWTQLTHAEKVALYRLQFNETFAEMNRRSNEWKTVMGCVFFFIGFAALVIWWQRVYVFPPKPITLTDERKAQQLQRMLDMKVNPVQGLASRWDYEKKQWKK.

The transit peptide at M1–T28 directs the protein to the mitochondrion. The segment at K13–G32 is disordered. At R29–N100 the chain is on the mitochondrial matrix side. A helical transmembrane segment spans residues E101 to Y126. Residues V127–K171 are Mitochondrial intermembrane-facing.

It belongs to the cytochrome c oxidase IV family. In terms of assembly, component of the cytochrome c oxidase (complex IV, CIV), a multisubunit enzyme composed of 14 subunits. The complex is composed of a catalytic core of 3 subunits MT-CO1, MT-CO2 and MT-CO3, encoded in the mitochondrial DNA, and 11 supernumerary subunits COX4I1 (or COX4I2), COX5A, COX5B, COX6A1 (or COX6A2), COX6B1 (or COX6B2), COX6C, COX7A2 (or COX7A1), COX7B, COX7C, COX8A and NDUFA4, which are encoded in the nuclear genome. The complex exists as a monomer or a dimer and forms supercomplexes (SCs) in the inner mitochondrial membrane with NADH-ubiquinone oxidoreductase (complex I, CI) and ubiquinol-cytochrome c oxidoreductase (cytochrome b-c1 complex, complex III, CIII), resulting in different assemblies (supercomplex SCI(1)III(2)IV(1) and megacomplex MCI(2)III(2)IV(2)). In terms of tissue distribution, highly expressed in lung.

The protein resides in the mitochondrion inner membrane. The protein operates within energy metabolism; oxidative phosphorylation. Functionally, component of the cytochrome c oxidase, the last enzyme in the mitochondrial electron transport chain which drives oxidative phosphorylation. The respiratory chain contains 3 multisubunit complexes succinate dehydrogenase (complex II, CII), ubiquinol-cytochrome c oxidoreductase (cytochrome b-c1 complex, complex III, CIII) and cytochrome c oxidase (complex IV, CIV), that cooperate to transfer electrons derived from NADH and succinate to molecular oxygen, creating an electrochemical gradient over the inner membrane that drives transmembrane transport and the ATP synthase. Cytochrome c oxidase is the component of the respiratory chain that catalyzes the reduction of oxygen to water. Electrons originating from reduced cytochrome c in the intermembrane space (IMS) are transferred via the dinuclear copper A center (CU(A)) of subunit 2 and heme A of subunit 1 to the active site in subunit 1, a binuclear center (BNC) formed by heme A3 and copper B (CU(B)). The BNC reduces molecular oxygen to 2 water molecules using 4 electrons from cytochrome c in the IMS and 4 protons from the mitochondrial matrix. The polypeptide is Cytochrome c oxidase subunit 4 isoform 2, mitochondrial (Homo sapiens (Human)).